A 439-amino-acid polypeptide reads, in one-letter code: Signal recognition particle 54 kDa protein (439 aa).

Residues G104–T111, D184–R188, and S242–D245 each bind GTP.

The protein belongs to the GTP-binding SRP family. SRP54 subfamily. In terms of assembly, part of the signal recognition particle protein translocation system, which is composed of SRP and FtsY. Archaeal SRP consists of a 7S RNA molecule of 300 nucleotides and two protein subunits: SRP54 and SRP19.

The protein resides in the cytoplasm. The catalysed reaction is GTP + H2O = GDP + phosphate + H(+). In terms of biological role, involved in targeting and insertion of nascent membrane proteins into the cytoplasmic membrane. Binds to the hydrophobic signal sequence of the ribosome-nascent chain (RNC) as it emerges from the ribosomes. The SRP-RNC complex is then targeted to the cytoplasmic membrane where it interacts with the SRP receptor FtsY. This is Signal recognition particle 54 kDa protein from Methanococcoides burtonii (strain DSM 6242 / NBRC 107633 / OCM 468 / ACE-M).